Consider the following 254-residue polypeptide: Thiazole synthase (254 aa).

Lysine 95 functions as the Schiff-base intermediate with DXP in the catalytic mechanism. 1-deoxy-D-xylulose 5-phosphate is bound by residues glycine 156, alanine 182–glycine 183, and asparagine 204–threonine 205.

The protein belongs to the ThiG family. As to quaternary structure, homotetramer. Forms heterodimers with either ThiH or ThiS.

Its subcellular location is the cytoplasm. It carries out the reaction [ThiS sulfur-carrier protein]-C-terminal-Gly-aminoethanethioate + 2-iminoacetate + 1-deoxy-D-xylulose 5-phosphate = [ThiS sulfur-carrier protein]-C-terminal Gly-Gly + 2-[(2R,5Z)-2-carboxy-4-methylthiazol-5(2H)-ylidene]ethyl phosphate + 2 H2O + H(+). It participates in cofactor biosynthesis; thiamine diphosphate biosynthesis. Its function is as follows. Catalyzes the rearrangement of 1-deoxy-D-xylulose 5-phosphate (DXP) to produce the thiazole phosphate moiety of thiamine. Sulfur is provided by the thiocarboxylate moiety of the carrier protein ThiS. In vitro, sulfur can be provided by H(2)S. This chain is Thiazole synthase, found in Shewanella sp. (strain W3-18-1).